The following is a 400-amino-acid chain: Argininosuccinate synthase (400 aa).

Residues 9 to 17 (AYSGGVDTS) and A37 contribute to the ATP site. Y88 lines the L-citrulline pocket. G118 contributes to the ATP binding site. L-aspartate is bound by residues T120, N124, and D125. N124 is a binding site for L-citrulline. Residues R128, S176, S185, E261, and Y273 each coordinate L-citrulline.

It belongs to the argininosuccinate synthase family. Type 1 subfamily. Homotetramer.

Its subcellular location is the cytoplasm. It catalyses the reaction L-citrulline + L-aspartate + ATP = 2-(N(omega)-L-arginino)succinate + AMP + diphosphate + H(+). It participates in amino-acid biosynthesis; L-arginine biosynthesis; L-arginine from L-ornithine and carbamoyl phosphate: step 2/3. The protein is Argininosuccinate synthase of Prochlorococcus marinus (strain MIT 9211).